The primary structure comprises 547 residues: Chaperonin GroEL (547 aa).

Residues 30 to 33, Lys-51, 87 to 91, Gly-415, 479 to 481, and Asp-495 each bind ATP; these read TLGP, DGTTT, and NAA. Residues 524-547 form a disordered region; it reads APKKDEPTPPAAGGGMGGMGGMDF. The span at 535-547 shows a compositional bias: gly residues; sequence AGGGMGGMGGMDF.

Belongs to the chaperonin (HSP60) family. In terms of assembly, forms a cylinder of 14 subunits composed of two heptameric rings stacked back-to-back. Interacts with the co-chaperonin GroES.

It localises to the cytoplasm. It carries out the reaction ATP + H2O + a folded polypeptide = ADP + phosphate + an unfolded polypeptide.. Functionally, together with its co-chaperonin GroES, plays an essential role in assisting protein folding. The GroEL-GroES system forms a nano-cage that allows encapsulation of the non-native substrate proteins and provides a physical environment optimized to promote and accelerate protein folding. This is Chaperonin GroEL from Xylella fastidiosa (strain 9a5c).